Here is a 416-residue protein sequence, read N- to C-terminus: MMKLLFIIISIIFVINVSNSTPTLQLSGYFNVNETTNANLFYLFYESQNSPSTDPLILWLTGGPGCSSLMAAFYENGPYFVNDNLTLSENPNSWNMVANVLYVDSPLGAGFSYVVDSDGYSTTETEISENLYSFLTQFLSKYPKYSKLPLYIFGESYAGHYVPSFSYYIYQKNLGLATINLKGLAIGNGMVDPYIQYGSLGPFAYAHGMLDINALKETEGLYESCQQAIDSGDYNMTTQICNNIMDIVQEYAGNFNVYDVSKTCYPNEPLCYNFTAIIDYLNLASTKQSFGVLPNSTWNVCSTQPYSAIIRDWFNTPINYIPTLLENYKVLVYNGNYDWICNFLGSTEWTSQLKWKYNQEFNNSPRKILYINGNTISGYSQSYDNLTMQVLLGASHMAPREAPVAALAMVESFIQN.

An N-terminal signal peptide occupies residues 1–20; sequence MMKLLFIIISIIFVINVSNS. Asn-33 and Asn-84 each carry an N-linked (GlcNAc...) asparagine glycan. Ser-156 is an active-site residue. N-linked (GlcNAc...) asparagine glycosylation is found at Asn-235, Asn-273, and Asn-295. Asp-338 is a catalytic residue. Asn-385 carries N-linked (GlcNAc...) asparagine glycosylation. Residue His-396 is part of the active site.

The protein belongs to the peptidase S10 family.

It localises to the secreted. Probable carboxypeptidase. This is Serine carboxypeptidase S10 family member 1 from Dictyostelium discoideum (Social amoeba).